Consider the following 105-residue polypeptide: Small ribosomal subunit protein uS10 (105 aa).

Belongs to the universal ribosomal protein uS10 family. As to quaternary structure, part of the 30S ribosomal subunit.

Its function is as follows. Involved in the binding of tRNA to the ribosomes. In Chlamydia abortus (strain DSM 27085 / S26/3) (Chlamydophila abortus), this protein is Small ribosomal subunit protein uS10.